Consider the following 393-residue polypeptide: Pyrimidine monooxygenase RutA (393 aa).

FMN-binding positions include 79 to 80 (IK), Asn145, Glu154, 170 to 171 (RY), and Ser220.

This sequence belongs to the NtaA/SnaA/DszA monooxygenase family. RutA subfamily.

It carries out the reaction uracil + FMNH2 + NADH + O2 = (Z)-3-ureidoacrylate + FMN + NAD(+) + H2O + H(+). The catalysed reaction is thymine + FMNH2 + NADH + O2 = (Z)-2-methylureidoacrylate + FMN + NAD(+) + H2O + H(+). Catalyzes the pyrimidine ring opening between N-3 and C-4 by an unusual flavin hydroperoxide-catalyzed mechanism, adding oxygen atoms in the process to yield ureidoacrylate peracid, that immediately reacts with FMN forming ureidoacrylate and FMN-N(5)-oxide. The FMN-N(5)-oxide reacts spontaneously with NADH to produce FMN. Requires the flavin reductase RutF to regenerate FMN in vivo. The polypeptide is Pyrimidine monooxygenase RutA (Escherichia coli O6:H1 (strain CFT073 / ATCC 700928 / UPEC)).